The sequence spans 261 residues: Syntaxin-7 (261 aa).

Serine 2 carries the post-translational modification N-acetylserine. Topologically, residues 2–238 (SYTPGVGGDP…DYQRKSRKTL (237 aa)) are cytoplasmic. Position 4 is a phosphothreonine (threonine 4). Serine 45 is subject to Phosphoserine. A coiled-coil region spans residues 47-69 (ELRQQLQQKQQYTNQLAKETDKY). Serine 75 is modified (phosphoserine). Threonine 79 bears the Phosphothreonine mark. Residues serine 125, serine 126, serine 129, and serine 205 each carry the phosphoserine modification. The tract at residues 129–148 (SGSFPEDSSKERNLVSWESQ) is disordered. The t-SNARE coiled-coil homology domain occupies 165 to 227 (LRLIHERESS…QQANQQLSRA (63 aa)). The helical; Anchor for type IV membrane protein transmembrane segment at 239–259 (CIIILILVIGVAIISLIIWGL) threads the bilayer. Residues 260–261 (NH) are Vesicular-facing.

This sequence belongs to the syntaxin family. As to quaternary structure, forms a SNARE complex with VTI1B, STX8 and VAMP8 which functions in the homotypic fusion of late endosomes. Component of the SNARE complex composed of STX7, STX8, VAMP7 and VTI1B that is required for heterotypic fusion of late endosomes with lysosomes. Interacts with VPS11, VPS16 and VPS18. Interacts with VPS33A. Interacts with TPC1. As to expression, highest expression is found in placenta followed by heart, skeletal muscle, kidney and brain. Low expression is found in pancreas, lung and liver.

The protein localises to the early endosome membrane. In terms of biological role, may be involved in protein trafficking from the plasma membrane to the early endosome (EE) as well as in homotypic fusion of endocytic organelles. Mediates the endocytic trafficking from early endosomes to late endosomes and lysosomes. This is Syntaxin-7 (STX7) from Homo sapiens (Human).